A 194-amino-acid polypeptide reads, in one-letter code: Peptidyl-tRNA hydrolase (194 aa).

Tyr17 provides a ligand contact to tRNA. Residue His22 is the Proton acceptor of the active site. TRNA-binding residues include Phe68, Asn70, and Asn116.

It belongs to the PTH family. As to quaternary structure, monomer.

The protein resides in the cytoplasm. It carries out the reaction an N-acyl-L-alpha-aminoacyl-tRNA + H2O = an N-acyl-L-amino acid + a tRNA + H(+). Functionally, hydrolyzes ribosome-free peptidyl-tRNAs (with 1 or more amino acids incorporated), which drop off the ribosome during protein synthesis, or as a result of ribosome stalling. Catalyzes the release of premature peptidyl moieties from peptidyl-tRNA molecules trapped in stalled 50S ribosomal subunits, and thus maintains levels of free tRNAs and 50S ribosomes. The protein is Peptidyl-tRNA hydrolase of Actinobacillus succinogenes (strain ATCC 55618 / DSM 22257 / CCUG 43843 / 130Z).